Reading from the N-terminus, the 170-residue chain is S-ribosylhomocysteine lyase (170 aa).

Residues H54, H58, and C128 each coordinate Fe cation.

The protein belongs to the LuxS family. As to quaternary structure, homodimer. Fe cation serves as cofactor.

It carries out the reaction S-(5-deoxy-D-ribos-5-yl)-L-homocysteine = (S)-4,5-dihydroxypentane-2,3-dione + L-homocysteine. Its function is as follows. Involved in the synthesis of autoinducer 2 (AI-2) which is secreted by bacteria and is used to communicate both the cell density and the metabolic potential of the environment. The regulation of gene expression in response to changes in cell density is called quorum sensing. Catalyzes the transformation of S-ribosylhomocysteine (RHC) to homocysteine (HC) and 4,5-dihydroxy-2,3-pentadione (DPD). In Marinomonas sp. (strain MWYL1), this protein is S-ribosylhomocysteine lyase.